The primary structure comprises 332 residues: 2,3-diketo-L-gulonate reductase (332 aa).

The active-site Proton donor is His44. NAD(+) is bound by residues 168-174, 224-225, and 304-306; these read ITMVDMS, WK, and GHE.

This sequence belongs to the LDH2/MDH2 oxidoreductase family. DlgD subfamily. Homodimer.

The protein localises to the cytoplasm. It carries out the reaction 3-dehydro-L-gulonate + NAD(+) = 2,3-dioxo-L-gulonate + NADH + H(+). The enzyme catalyses 3-dehydro-L-gulonate + NADP(+) = 2,3-dioxo-L-gulonate + NADPH + H(+). In terms of biological role, catalyzes the reduction of 2,3-diketo-L-gulonate in the presence of NADH, to form 3-keto-L-gulonate. The chain is 2,3-diketo-L-gulonate reductase from Shigella boydii serotype 4 (strain Sb227).